A 209-amino-acid polypeptide reads, in one-letter code: Large ribosomal subunit protein uL3 (209 aa).

Gln-150 is modified (N5-methylglutamine).

Belongs to the universal ribosomal protein uL3 family. As to quaternary structure, part of the 50S ribosomal subunit. Forms a cluster with proteins L14 and L19. In terms of processing, methylated by PrmB.

Functionally, one of the primary rRNA binding proteins, it binds directly near the 3'-end of the 23S rRNA, where it nucleates assembly of the 50S subunit. The polypeptide is Large ribosomal subunit protein uL3 (Klebsiella pneumoniae (strain 342)).